Consider the following 1072-residue polypeptide: Carbamoyl phosphate synthase large chain (1072 aa).

The tract at residues methionine 1–glutamate 401 is carboxyphosphate synthetic domain. ATP-binding residues include arginine 129, arginine 169, glycine 175, glycine 176, lysine 208, isoleucine 210, glutamate 215, glycine 241, valine 242, histidine 243, glutamine 284, and glutamate 298. An ATP-grasp 1 domain is found at arginine 133–valine 327. Mg(2+) contacts are provided by glutamine 284, glutamate 298, and asparagine 300. 3 residues coordinate Mn(2+): glutamine 284, glutamate 298, and asparagine 300. The tract at residues leucine 402–leucine 546 is oligomerization domain. Residues isoleucine 547 to glycine 929 are carbamoyl phosphate synthetic domain. The ATP-grasp 2 domain maps to glutamate 671–leucine 861. Residues arginine 707, arginine 746, glutamate 752, glycine 777, valine 778, histidine 779, serine 780, glutamine 820, and glutamate 832 each coordinate ATP. 3 residues coordinate Mg(2+): glutamine 820, glutamate 832, and asparagine 834. Mn(2+) contacts are provided by glutamine 820, glutamate 832, and asparagine 834. The MGS-like domain maps to isoleucine 930–alanine 1072. Positions isoleucine 930–alanine 1072 are allosteric domain.

It belongs to the CarB family. As to quaternary structure, composed of two chains; the small (or glutamine) chain promotes the hydrolysis of glutamine to ammonia, which is used by the large (or ammonia) chain to synthesize carbamoyl phosphate. Tetramer of heterodimers (alpha,beta)4. Mg(2+) serves as cofactor. Requires Mn(2+) as cofactor.

It carries out the reaction hydrogencarbonate + L-glutamine + 2 ATP + H2O = carbamoyl phosphate + L-glutamate + 2 ADP + phosphate + 2 H(+). It catalyses the reaction hydrogencarbonate + NH4(+) + 2 ATP = carbamoyl phosphate + 2 ADP + phosphate + 2 H(+). It functions in the pathway amino-acid biosynthesis; L-arginine biosynthesis; carbamoyl phosphate from bicarbonate: step 1/1. The protein operates within pyrimidine metabolism; UMP biosynthesis via de novo pathway; (S)-dihydroorotate from bicarbonate: step 1/3. Functionally, large subunit of the glutamine-dependent carbamoyl phosphate synthetase (CPSase). CPSase catalyzes the formation of carbamoyl phosphate from the ammonia moiety of glutamine, carbonate, and phosphate donated by ATP, constituting the first step of 2 biosynthetic pathways, one leading to arginine and/or urea and the other to pyrimidine nucleotides. The large subunit (synthetase) binds the substrates ammonia (free or transferred from glutamine from the small subunit), hydrogencarbonate and ATP and carries out an ATP-coupled ligase reaction, activating hydrogencarbonate by forming carboxy phosphate which reacts with ammonia to form carbamoyl phosphate. The sequence is that of Carbamoyl phosphate synthase large chain from Bacillus anthracis (strain A0248).